The primary structure comprises 181 residues: Probable nicotinate-nucleotide adenylyltransferase (181 aa).

It belongs to the NadD family.

The enzyme catalyses nicotinate beta-D-ribonucleotide + ATP + H(+) = deamido-NAD(+) + diphosphate. Its pathway is cofactor biosynthesis; NAD(+) biosynthesis; deamido-NAD(+) from nicotinate D-ribonucleotide: step 1/1. Functionally, catalyzes the reversible adenylation of nicotinate mononucleotide (NaMN) to nicotinic acid adenine dinucleotide (NaAD). This chain is Probable nicotinate-nucleotide adenylyltransferase, found in Campylobacter jejuni subsp. jejuni serotype O:23/36 (strain 81-176).